Here is a 163-residue protein sequence, read N- to C-terminus: Neurotrophin-3 (163 aa).

The first 3 residues, 1-3 (IQS), serve as a signal peptide directing secretion. The propeptide occupies 4–119 (TSMDQGILTE…ALNRTSRRKR (116 aa)). Disordered regions lie at residues 38–60 (ARTKDGTQTTVKKSEAEADATAS) and 90–131 (LLSE…YSVC). N-linked (GlcNAc...) asparagine glycosylation is present at Asn-112.

It belongs to the NGF-beta family.

The protein localises to the secreted. Seems to promote the survival of visceral and proprioceptive sensory neurons. The polypeptide is Neurotrophin-3 (NTF3) (Eunectes notaeus (Yellow anaconda)).